A 918-amino-acid polypeptide reads, in one-letter code: Sarcosine dehydrogenase, mitochondrial (918 aa).

Residues 1-13 (MASLSRALRVAAA) are compositionally biased toward low complexity. A mitochondrion-targeting transit peptide spans 1 to 22 (MASLSRALRVAAAHPRQSPTRG). Residues 1–40 (MASLSRALRVAAAHPRQSPTRGMGPCNLSSAAGPTAEKSV) form a disordered region. Lysine 38 carries the N6-succinyllysine modification. At histidine 108 the chain carries Tele-8alpha-FAD histidine. Position 173 is an N6-acetyllysine; alternate (lysine 173). Lysine 173 is subject to N6-succinyllysine; alternate. N6-succinyllysine occurs at positions 377 and 391. N6-acetyllysine is present on residues lysine 559 and lysine 775. At tyrosine 777 the chain carries Phosphotyrosine. An N6-acetyllysine; alternate mark is found at lysine 802, lysine 884, and lysine 904. 3 positions are modified to N6-succinyllysine; alternate: lysine 802, lysine 884, and lysine 904.

It belongs to the GcvT family. The cofactor is FAD. As to expression, expressed in pancreas, liver and kidney.

The protein resides in the mitochondrion matrix. It catalyses the reaction (6S)-5,6,7,8-tetrahydrofolyl-(gamma-L-Glu)(n) + sarcosine + oxidized [electron-transfer flavoprotein] + H(+) = (6R)-5,10-methylenetetrahydrofolyl-(gamma-L-Glu)(n) + reduced [electron-transfer flavoprotein] + glycine. Its pathway is amine and polyamine degradation; sarcosine degradation; formaldehyde and glycine from sarcosine: step 1/1. Functionally, catalyzes the last step of the oxidative degradation of choline to glycine. Converts sarcosine into glycine. This Homo sapiens (Human) protein is Sarcosine dehydrogenase, mitochondrial.